The sequence spans 764 residues: Kinesin-like protein KIN-14N (764 aa).

Residues 1–50 form a disordered region; the sequence is MSTRATRPGMLHQKENAADAQAGKRQRTAAGSAARAPLSANAAPPAPDPA. Over residues 29 to 50 the composition is skewed to low complexity; that stretch reads AAGSAARAPLSANAAPPAPDPA. A coiled-coil region spans residues 105-416; it reads AEIGKLNGLL…RLHNTILELK (312 aa). The region spanning 418-747 is the Kinesin motor domain; the sequence is NIRVFCRVRP…LRFAARVNSC (330 aa). 498–505 provides a ligand contact to ATP; that stretch reads GQTGSGKT.

The protein belongs to the TRAFAC class myosin-kinesin ATPase superfamily. Kinesin family. KIN-14 subfamily.

This Oryza sativa subsp. japonica (Rice) protein is Kinesin-like protein KIN-14N.